The sequence spans 162 residues: Phosphopantetheine adenylyltransferase (162 aa).

T10 contributes to the substrate binding site. Residues 10–11 and H18 each bind ATP; that span reads TF. K42, L74, and R88 together coordinate substrate. Residues 89-91, E99, and 124-130 each bind ATP; these read GLR and NSFISST.

This sequence belongs to the bacterial CoaD family. As to quaternary structure, homohexamer. Requires Mg(2+) as cofactor.

The protein localises to the cytoplasm. It catalyses the reaction (R)-4'-phosphopantetheine + ATP + H(+) = 3'-dephospho-CoA + diphosphate. Its pathway is cofactor biosynthesis; coenzyme A biosynthesis; CoA from (R)-pantothenate: step 4/5. Functionally, reversibly transfers an adenylyl group from ATP to 4'-phosphopantetheine, yielding dephospho-CoA (dPCoA) and pyrophosphate. This Alteromonas mediterranea (strain DSM 17117 / CIP 110805 / LMG 28347 / Deep ecotype) protein is Phosphopantetheine adenylyltransferase.